Reading from the N-terminus, the 137-residue chain is 5-hydroxyisourate hydrolase (137 aa).

A signal peptide spans 1–23 (MLKRYLVLSVVTAAFSLPSLVYA). Positions 32, 70, and 134 each coordinate substrate.

This sequence belongs to the transthyretin family. 5-hydroxyisourate hydrolase subfamily. In terms of assembly, homotetramer.

It localises to the periplasm. It carries out the reaction 5-hydroxyisourate + H2O = 5-hydroxy-2-oxo-4-ureido-2,5-dihydro-1H-imidazole-5-carboxylate + H(+). Functionally, catalyzes the hydrolysis of 5-hydroxyisourate (HIU) to 2-oxo-4-hydroxy-4-carboxy-5-ureidoimidazoline (OHCU). This Escherichia coli O157:H7 protein is 5-hydroxyisourate hydrolase (hiuH).